We begin with the raw amino-acid sequence, 89 residues long: Small ribosomal subunit protein uS15 (89 aa).

It belongs to the universal ribosomal protein uS15 family. As to quaternary structure, part of the 30S ribosomal subunit. Forms a bridge to the 50S subunit in the 70S ribosome, contacting the 23S rRNA.

Functionally, one of the primary rRNA binding proteins, it binds directly to 16S rRNA where it helps nucleate assembly of the platform of the 30S subunit by binding and bridging several RNA helices of the 16S rRNA. Forms an intersubunit bridge (bridge B4) with the 23S rRNA of the 50S subunit in the ribosome. This chain is Small ribosomal subunit protein uS15, found in Burkholderia ambifaria (strain MC40-6).